The primary structure comprises 66 residues: DNA-binding protein 7d (66 aa).

An N6-methyllysine; partial mark is found at K5 and K7.

This sequence belongs to the 7 kDa DNA-binding/endoribonuclease P2 family. Monomer. In terms of processing, lys-5 was 70% monomethylated in form 7a, 25% in form 7b, and 20% in form 7d. Lys-7 was 50% monomethylated in form 7a, 40% in form 7b, and 50% in form 7d.

The protein localises to the cytoplasm. Can constrain negative DNA supercoils. May be involved in maintaining the integrity of the genome at high temperature. In Sulfolobus acidocaldarius (strain ATCC 33909 / DSM 639 / JCM 8929 / NBRC 15157 / NCIMB 11770), this protein is DNA-binding protein 7d.